The sequence spans 453 residues: Dibenzothiophene-sulfone monooxygenase (453 aa).

Residues aspartate 59, threonine 106, histidine 156, tyrosine 160, and serine 231 each coordinate FMN.

This sequence belongs to the NtaA/SnaA/DszA monooxygenase family. In terms of assembly, homodimer.

It localises to the cytoplasm. The catalysed reaction is dibenzothiophene 5,5-dioxide + FMNH2 + NADH + O2 = 2'-hydroxybiphenyl-2-sulfinate + FMN + NAD(+) + H2O + H(+). Its pathway is sulfur metabolism; dibenzothiophene degradation. In terms of biological role, catalyzes the second step of the '4S' desulfurization pathway that removes covalently bound sulfur from dibenzothiophene (DBT) without breaking carbon-carbon bonds. Metabolizes DBT-sulfone (DBTO2 or DBT 5,5-dioxide) to 2-(2'-hydroxyphenyl)benzene sulphinate (HBPS). This Rhodococcus erythropolis (strain XP) protein is Dibenzothiophene-sulfone monooxygenase.